The following is a 204-amino-acid chain: MGAYRYMQKLWRKKQSDVMRFLLRVRCWQYRQLSALHRAPRPTRPDKARRLGYKAKQGYVIYRVRVRRGGRKRPVPKGATYGKPVHHGVNQIKFARSLQSVAEERAGRHCGGLRVLSSYWVGEDSTYKFFEVILVDIFHKAIRRNPDTQWITKAVHKHREMRGLTSAGKKSRGLGKGHKFHLTIGGSRRAAWRRRNTLQLHRYR.

This sequence belongs to the eukaryotic ribosomal protein eL15 family. In terms of assembly, component of the large ribosomal subunit.

The protein localises to the cytoplasm. Its function is as follows. Component of the large ribosomal subunit. The ribosome is a large ribonucleoprotein complex responsible for the synthesis of proteins in the cell. In Tachysurus fulvidraco (Yellow catfish), this protein is Large ribosomal subunit protein eL15 (rpl15).